The following is a 480-amino-acid chain: Probable E3 ubiquitin protein ligase DRIPH (480 aa).

The RING-type zinc finger occupies 16-57; the sequence is CPICTNPFKDATTISECLHTFCRSCIRNKFINERVNACPVCN. 4 disordered regions span residues 93 to 133, 167 to 193, 241 to 261, and 280 to 356; these read GPKT…EPAN, RGRKASLPKKIDSKPEPELPPKEPKIK, TPPDIVEPEISSDDDTEESVE, and VNQN…EMKV. Basic residues predominate over residues 103-112; sequence SSKKKRKSRT. The span at 113-133 shows a compositional bias: low complexity; that stretch reads SLRVSSSRVSSSPDTPLEPAN. The segment covering 175-193 has biased composition (basic and acidic residues); that stretch reads KKIDSKPEPELPPKEPKIK. Positions 246-260 are enriched in acidic residues; sequence VEPEISSDDDTEESV. The span at 298–309 shows a compositional bias: polar residues; the sequence is GQKLKTNGAATS.

It catalyses the reaction S-ubiquitinyl-[E2 ubiquitin-conjugating enzyme]-L-cysteine + [acceptor protein]-L-lysine = [E2 ubiquitin-conjugating enzyme]-L-cysteine + N(6)-ubiquitinyl-[acceptor protein]-L-lysine.. It participates in protein modification; protein ubiquitination. This is Probable E3 ubiquitin protein ligase DRIPH from Arabidopsis thaliana (Mouse-ear cress).